The sequence spans 367 residues: Chorismate synthase (367 aa).

Residues Arg48 and Arg54 each coordinate NADP(+). Residues Arg125–Ser127, Asn238–Ala239, Gly278, Lys293–Ser297, and Arg319 each bind FMN.

Belongs to the chorismate synthase family. Homotetramer. FMNH2 is required as a cofactor.

It catalyses the reaction 5-O-(1-carboxyvinyl)-3-phosphoshikimate = chorismate + phosphate. Its pathway is metabolic intermediate biosynthesis; chorismate biosynthesis; chorismate from D-erythrose 4-phosphate and phosphoenolpyruvate: step 7/7. Catalyzes the anti-1,4-elimination of the C-3 phosphate and the C-6 proR hydrogen from 5-enolpyruvylshikimate-3-phosphate (EPSP) to yield chorismate, which is the branch point compound that serves as the starting substrate for the three terminal pathways of aromatic amino acid biosynthesis. This reaction introduces a second double bond into the aromatic ring system. In Stenotrophomonas maltophilia (strain R551-3), this protein is Chorismate synthase.